Reading from the N-terminus, the 374-residue chain is Potassium channel subfamily K member 9 (374 aa).

Residues 1–8 (MKRQNVRT) are Cytoplasmic-facing. A helical transmembrane segment spans residues 9–29 (LSLIVCTFTYLLVGAAVFDAL). At 30–88 (ESDHEMREEEKLKAEEIRIKGKYNISSEDYRQLELVILQSEPHRAGVQWKFAGSFYFAI) the chain is on the extracellular side. N-linked (GlcNAc...) asparagine glycosylation is present at Asn53. An intramembrane region (pore-forming) is located at residues 89–101 (TVITTIGYGHAAP). Positions 93, 94, 95, and 96 each coordinate K(+). Positions 93 to 98 (TIGYGH) are selectivity filter 1. The Extracellular segment spans residues 102 to 107 (GTDAGK). The helical transmembrane segment at 108-128 (AFCMFYAVLGIPLTLVMFQSL) threads the bilayer. At 129–158 (GERMNTFVRYLLKRIKKCCGMRNTDVSMEN) the chain is on the cytoplasmic side. Residues 159–179 (MVTVGFFSCMGTLCIGAAAFS) traverse the membrane as a helical segment. Topologically, residues 180–194 (QCEEWSFFHAYYYCF) are extracellular. The segment at residues 195–207 (ITLTTIGFGDYVA) is an intramembrane region (pore-forming). K(+) contacts are provided by Thr199, Ile200, Gly201, and Phe202. Residues 199–204 (TIGFGD) form a selectivity filter 2 region. Topologically, residues 208–218 (LQTKGALQKKP) are extracellular. A helical transmembrane segment spans residues 219-239 (LYVAFSFMYILVGLTVIGAFL). Residues 240 to 374 (NLVVLRFLTM…QRLMKRRKSV (135 aa)) are Cytoplasmic-facing. The X-gate stretch occupies residues 243-248 (VLRFLT).

This sequence belongs to the two pore domain potassium channel (TC 1.A.1.8) family. Homodimer. Heterodimer with KCNK1. Heterodimer with KCNK3. Mainly found in the cerebellum. Also found in adrenal gland, kidney and lung.

It is found in the cell membrane. The protein resides in the mitochondrion inner membrane. It localises to the cell projection. Its subcellular location is the dendrite. The enzyme catalyses K(+)(in) = K(+)(out). The catalysed reaction is Na(+)(in) = Na(+)(out). With respect to regulation, inhibited by extracellular acidification adopting a nonconductive conformation at pH 6.0. Inhibited by phorbol 12-myristate 13-acetate (PMA). In terms of biological role, k(+) channel that conducts voltage-dependent outward rectifying currents upon membrane depolarization. Voltage sensing is coupled to K(+) electrochemical gradient in an 'ion flux gating' mode where outward but not inward ion flow opens the gate. Changes ion selectivity and becomes permeable to Na(+) ions in response to extracellular acidification. Protonation of the pH sensor His-98 stabilizes C-type inactivation conformation likely converting the channel from outward K(+)-conducting, to inward Na(+)-conducting to nonconductive state. Homo- and heterodimerizes to form functional channels with distinct regulatory and gating properties. Allows K(+) currents with fast-gating kinetics important for the repolarization and hyperpolarization phases of action potentials. In granule neurons, hyperpolarizes the resting membrane potential to limit intrinsic neuronal excitability, but once the action potential threshold is reached, supports high-frequency action potential firing and increased neuronal excitability. Homomeric and/or heteromeric KCNK3:KCNK9 channels operate in cerebellar granule cells, whereas heteromeric KCNK1:KCNK9 enables currents in hippocampal dentate gyrus granule neurons. Dispensable for central chemosensory respiration i.e. breathing controlled by brainstem CO2/pH, it rather conducts pH-sensitive currents and controls the firing rate of serotonergic raphe neurons involved in potentiation of the respiratory chemoreflex. In retinal ganglion cells, mediates outward currents that regulate action potentials in response to acidification of the synaptic cleft. Involved in transmission of image-forming and nonimage-forming visual information in the retina. In adrenal gland, contributes to the maintenance of a hyperpolarized resting membrane potential of aldosterone-producing cells at zona glomerulosa and limits aldosterone release as part of a regulatory mechanism that controls arterial blood pressure and electrolyte homeostasis. In Homo sapiens (Human), this protein is Potassium channel subfamily K member 9.